The chain runs to 144 residues: Large ribosomal subunit protein uL15 (144 aa).

The disordered stretch occupies residues 1–48 (MQLNNLKPAAGSKHAKRRVGRGIGSGLGKTAGRGHKGQKSRSGGFHKV). The span at 21–31 (RGIGSGLGKTA) shows a compositional bias: gly residues.

This sequence belongs to the universal ribosomal protein uL15 family. Part of the 50S ribosomal subunit.

In terms of biological role, binds to the 23S rRNA. The protein is Large ribosomal subunit protein uL15 of Cupriavidus pinatubonensis (strain JMP 134 / LMG 1197) (Cupriavidus necator (strain JMP 134)).